Consider the following 254-residue polypeptide: Proteasome activator complex subunit 3 (254 aa).

Ala-2 carries the post-translational modification N-acetylalanine. Residues Ser-17 and Ser-24 each carry the phosphoserine modification. Lys-195 bears the N6-acetyllysine; by P300/CBP mark. Position 247 is a phosphoserine; by CHEK2 (Ser-247).

Belongs to the PA28 family. Homoheptamer; the stability of the heptamer is essential for the specific activation of the trypsine-like subunit and inhibition of the chymotrypsin-like and postglutamyl-preferring (PGPH) subunits of the proteasome. Interacts with p53/TP53, MDM2 and MAP3K3. Associates with the proteasome. Interacts with CCAR2. Interacts with PSME3IP1 (via C-terminus); the interaction is direct and promotes the association of PSME3 with the 20S proteasome. Interacts with COIL; the interaction is inhibited by PSME3IP1. Phosphorylated by MAP3K3. Phosphorylation at Ser-247 promotes its association with CCAR2. In terms of processing, acetylation at the major site Lys-195 is important for oligomerization and ability to degrade its target substrates. Deacetylated by SIRT1.

It is found in the nucleus. The protein resides in the cytoplasm. Functionally, subunit of the 11S REG-gamma (also called PA28-gamma) proteasome regulator, a doughnut-shaped homoheptamer which associates with the proteasome. 11S REG-gamma activates the trypsin-like catalytic subunit of the proteasome but inhibits the chymotrypsin-like and postglutamyl-preferring (PGPH) subunits. Facilitates the MDM2-p53/TP53 interaction which promotes ubiquitination- and MDM2-dependent proteasomal degradation of p53/TP53, limiting its accumulation and resulting in inhibited apoptosis after DNA damage. May also be involved in cell cycle regulation. Mediates CCAR2 and CHEK2-dependent SIRT1 inhibition. The protein is Proteasome activator complex subunit 3 (PSME3) of Pongo abelii (Sumatran orangutan).